The sequence spans 605 residues: Elongation factor 4 (605 aa).

In terms of domain architecture, tr-type G spans 9-192 (NRIRNFCIIA…AIVQRIPAPA (184 aa)). Residues 21–26 (DHGKST) and 139–142 (NKID) each bind GTP.

The protein belongs to the TRAFAC class translation factor GTPase superfamily. Classic translation factor GTPase family. LepA subfamily.

It is found in the cell inner membrane. It carries out the reaction GTP + H2O = GDP + phosphate + H(+). Required for accurate and efficient protein synthesis under certain stress conditions. May act as a fidelity factor of the translation reaction, by catalyzing a one-codon backward translocation of tRNAs on improperly translocated ribosomes. Back-translocation proceeds from a post-translocation (POST) complex to a pre-translocation (PRE) complex, thus giving elongation factor G a second chance to translocate the tRNAs correctly. Binds to ribosomes in a GTP-dependent manner. This is Elongation factor 4 from Pelodictyon phaeoclathratiforme (strain DSM 5477 / BU-1).